The sequence spans 477 residues: GTPase Der (477 aa).

2 EngA-type G domains span residues 3 to 167 (LTIA…GKER) and 206 to 382 (LRIA…RMWN). GTP contacts are provided by residues 9-16 (GRPNVGKS), 56-60 (DTAGL), 119-122 (NKSE), 212-219 (GRPNTGKS), 259-263 (DTAGL), and 324-327 (NKWD). The 85-residue stretch at 383–467 (RRISTAKLNR…PIRISLRASD (85 aa)) folds into the KH-like domain.

Belongs to the TRAFAC class TrmE-Era-EngA-EngB-Septin-like GTPase superfamily. EngA (Der) GTPase family. As to quaternary structure, associates with the 50S ribosomal subunit.

In terms of biological role, GTPase that plays an essential role in the late steps of ribosome biogenesis. This Bartonella quintana (strain Toulouse) (Rochalimaea quintana) protein is GTPase Der.